A 79-amino-acid chain; its full sequence is Acyl carrier protein (79 aa).

Residues 2–77 enclose the Carrier domain; that stretch reads ADHASKIKDI…DAVAYLEAKV (76 aa). Serine 37 carries the post-translational modification O-(pantetheine 4'-phosphoryl)serine.

Belongs to the acyl carrier protein (ACP) family. 4'-phosphopantetheine is transferred from CoA to a specific serine of apo-ACP by AcpS. This modification is essential for activity because fatty acids are bound in thioester linkage to the sulfhydryl of the prosthetic group.

The protein localises to the cytoplasm. It participates in lipid metabolism; fatty acid biosynthesis. Its function is as follows. Carrier of the growing fatty acid chain in fatty acid biosynthesis. This Gemmatimonas aurantiaca (strain DSM 14586 / JCM 11422 / NBRC 100505 / T-27) protein is Acyl carrier protein.